Consider the following 230-residue polypeptide: Ly6/PLAUR domain-containing protein 8 (230 aa).

A signal peptide spans 1-20 (MKSFLFAGIVVVLTVAAVDT). Asn-37, Asn-44, Asn-74, Asn-77, Asn-90, Asn-106, Asn-110, Asn-132, Asn-137, Asn-156, Asn-168, Asn-181, and Asn-197 each carry an N-linked (GlcNAc...) asparagine glycan. The UPAR/Ly6 domain occupies 125-172 (CPACYGNNETSCNETRKCYGERCVSIIAEFTNETKTLVLKGCSNVSIS). Ser-211 carries GPI-anchor amidated serine lipidation. The propeptide at 212 to 230 (QASFTPLALASILLLSLLL) is removed in mature form.

This sequence belongs to the CNF-like-inhibitor family. In terms of processing, highly N-glycosylated. Not O-glycosylated. GPI-anchored. The GPI-anchor is cleaved, leading to secretion into the colonic lumen.

It is found in the cell membrane. It localises to the secreted. Functionally, secreted protein specifically required to prevent invasion of Gram-negative bacteria in the inner mucus layer of the colon epithelium, a portion of the large intestine which is free of commensal microbiota. Prevents invasion of flagellated microbiota by binding to the flagellum of bacteria, such as P.mirabilis, thereby inhibiting bacterial motility in the intestinal lumen. Segregation of intestinal bacteria and epithelial cells in the colon is required to preserve intestinal homeostasis. The sequence is that of Ly6/PLAUR domain-containing protein 8 (LYPD8) from Bos taurus (Bovine).